The chain runs to 280 residues: Beta carbonic anhydrase 4 (280 aa).

At alanine 2 the chain carries N-acetylalanine. A coiled-coil region spans residues 47–76; sequence NVAAAKIKALTAELKELDSSNSDAIERIKT. Threonine 57 is subject to Phosphothreonine. At serine 117 the chain carries Phosphoserine. Cysteine 223 is subject to S-nitrosocysteine.

The protein belongs to the beta-class carbonic anhydrase family. As to quaternary structure, interacts with DTX56. Strongly expressed in aerial tissues including leaves, stems, flowers and siliques. Accumulates in both guard cells and mesophyll cells.

The protein resides in the cell membrane. It carries out the reaction hydrogencarbonate + H(+) = CO2 + H2O. In terms of biological role, reversible hydration of carbon dioxide. Together with BCA1, involved in the CO(2) signaling pathway which controls gas-exchange between plants and the atmosphere by modulating stomatal development and movements. Promotes water use efficiency. This chain is Beta carbonic anhydrase 4, found in Arabidopsis thaliana (Mouse-ear cress).